Here is a 410-residue protein sequence, read N- to C-terminus: Histidine--tRNA ligase (410 aa).

This sequence belongs to the class-II aminoacyl-tRNA synthetase family. Homodimer.

It is found in the cytoplasm. The enzyme catalyses tRNA(His) + L-histidine + ATP = L-histidyl-tRNA(His) + AMP + diphosphate + H(+). In Campylobacter hominis (strain ATCC BAA-381 / DSM 21671 / CCUG 45161 / LMG 19568 / NCTC 13146 / CH001A), this protein is Histidine--tRNA ligase.